The chain runs to 30 residues: Putative cytochrome bd-II ubiquinol oxidase subunit AppX (30 aa).

Residues 4-24 form a helical membrane-spanning segment; it reads LLWFVGILLMCSLSTLVLVWL.

Belongs to the cytochrome ubiquinol oxidase subunit X family. As to quaternary structure, able to interact with CydA and CydB upon overexpression.

Its subcellular location is the cell inner membrane. Might be part of cytochrome bd-II oxidase (appB and appC). Able to restore reductant resistance to a cydX deletion mutant upon overexpression. CydX and this protein may have some functional overlap. This chain is Putative cytochrome bd-II ubiquinol oxidase subunit AppX (appX), found in Escherichia coli (strain K12).